Reading from the N-terminus, the 73-residue chain is Small ribosomal subunit protein bS18c (73 aa).

The protein belongs to the bacterial ribosomal protein bS18 family. Part of the 30S ribosomal subunit.

The protein resides in the plastid. The protein localises to the chloroplast. This Nephroselmis olivacea (Green alga) protein is Small ribosomal subunit protein bS18c.